Reading from the N-terminus, the 110-residue chain is UPF0122 protein Aflv_1766 (110 aa).

The protein belongs to the UPF0122 family.

Functionally, might take part in the signal recognition particle (SRP) pathway. This is inferred from the conservation of its genetic proximity to ftsY/ffh. May be a regulatory protein. The polypeptide is UPF0122 protein Aflv_1766 (Anoxybacillus flavithermus (strain DSM 21510 / WK1)).